Consider the following 198-residue polypeptide: NAD(P)H dehydrogenase (quinone) (198 aa).

The 186-residue stretch at 4–189 (VLVLYYSMYG…ALARYQGRHV (186 aa)) folds into the Flavodoxin-like domain. FMN contacts are provided by residues 10 to 15 (SMYGHV) and 78 to 80 (TRF). NAD(+) is bound at residue Y12. W98 is a binding site for substrate. FMN is bound by residues 113–118 (STGTGG) and H133.

Belongs to the WrbA family. Requires FMN as cofactor.

It catalyses the reaction a quinone + NADH + H(+) = a quinol + NAD(+). The catalysed reaction is a quinone + NADPH + H(+) = a quinol + NADP(+). This Halorhodospira halophila (strain DSM 244 / SL1) (Ectothiorhodospira halophila (strain DSM 244 / SL1)) protein is NAD(P)H dehydrogenase (quinone).